A 235-amino-acid polypeptide reads, in one-letter code: 2-C-methyl-D-erythritol 4-phosphate cytidylyltransferase (235 aa).

It belongs to the IspD/TarI cytidylyltransferase family. IspD subfamily. Homodimer.

The catalysed reaction is 2-C-methyl-D-erythritol 4-phosphate + CTP + H(+) = 4-CDP-2-C-methyl-D-erythritol + diphosphate. Its pathway is isoprenoid biosynthesis; isopentenyl diphosphate biosynthesis via DXP pathway; isopentenyl diphosphate from 1-deoxy-D-xylulose 5-phosphate: step 2/6. In terms of biological role, catalyzes the formation of 4-diphosphocytidyl-2-C-methyl-D-erythritol from CTP and 2-C-methyl-D-erythritol 4-phosphate (MEP). The sequence is that of 2-C-methyl-D-erythritol 4-phosphate cytidylyltransferase from Blochmanniella pennsylvanica (strain BPEN).